Here is a 477-residue protein sequence, read N- to C-terminus: 3-isopropylmalate dehydratase large subunit (477 aa).

Positions 351, 411, and 414 each coordinate [4Fe-4S] cluster.

This sequence belongs to the aconitase/IPM isomerase family. LeuC type 1 subfamily. Heterodimer of LeuC and LeuD. Requires [4Fe-4S] cluster as cofactor.

It carries out the reaction (2R,3S)-3-isopropylmalate = (2S)-2-isopropylmalate. It functions in the pathway amino-acid biosynthesis; L-leucine biosynthesis; L-leucine from 3-methyl-2-oxobutanoate: step 2/4. Functionally, catalyzes the isomerization between 2-isopropylmalate and 3-isopropylmalate, via the formation of 2-isopropylmaleate. This chain is 3-isopropylmalate dehydratase large subunit, found in Kineococcus radiotolerans (strain ATCC BAA-149 / DSM 14245 / SRS30216).